A 261-amino-acid polypeptide reads, in one-letter code: uncharacterized protein (261 aa).

3 helical membrane passes run Trp-15–Cys-35, Val-87–Ala-107, and Leu-131–Ile-151. Positions Leu-234–Glu-246 are enriched in basic and acidic residues. Residues Leu-234 to Gln-261 form a disordered region.

The protein localises to the membrane. This is an uncharacterized protein from Caenorhabditis elegans.